The primary structure comprises 157 residues: SsrA-binding protein (157 aa).

The segment at 133 to 157 (LHDKRESEKKRDWGREKGRLLRARG) is disordered. A compositionally biased stretch (basic and acidic residues) spans 135–151 (DKRESEKKRDWGREKGR).

This sequence belongs to the SmpB family.

Its subcellular location is the cytoplasm. Required for rescue of stalled ribosomes mediated by trans-translation. Binds to transfer-messenger RNA (tmRNA), required for stable association of tmRNA with ribosomes. tmRNA and SmpB together mimic tRNA shape, replacing the anticodon stem-loop with SmpB. tmRNA is encoded by the ssrA gene; the 2 termini fold to resemble tRNA(Ala) and it encodes a 'tag peptide', a short internal open reading frame. During trans-translation Ala-aminoacylated tmRNA acts like a tRNA, entering the A-site of stalled ribosomes, displacing the stalled mRNA. The ribosome then switches to translate the ORF on the tmRNA; the nascent peptide is terminated with the 'tag peptide' encoded by the tmRNA and targeted for degradation. The ribosome is freed to recommence translation, which seems to be the essential function of trans-translation. The polypeptide is SsrA-binding protein (Bradyrhizobium sp. (strain BTAi1 / ATCC BAA-1182)).